A 196-amino-acid chain; its full sequence is uncharacterized protein (196 aa).

A helical transmembrane segment spans residues I11 to V31.

It is found in the membrane. This is an uncharacterized protein from Mycoplasma genitalium (strain ATCC 33530 / DSM 19775 / NCTC 10195 / G37) (Mycoplasmoides genitalium).